Here is a 525-residue protein sequence, read N- to C-terminus: GMP synthase [glutamine-hydrolyzing] (525 aa).

Positions 9–207 constitute a Glutamine amidotransferase type-1 domain; it reads RILILDFGSQ…VLEICGCAAL (199 aa). The active-site Nucleophile is cysteine 86. Residues histidine 181 and glutamate 183 contribute to the active site. A GMPS ATP-PPase domain is found at 208 to 400; sequence WTPATIIEDA…LGLPYDMLYR (193 aa). ATP is bound at residue 235–241; the sequence is SGGVDSS.

Homodimer.

The catalysed reaction is XMP + L-glutamine + ATP + H2O = GMP + L-glutamate + AMP + diphosphate + 2 H(+). Its pathway is purine metabolism; GMP biosynthesis; GMP from XMP (L-Gln route): step 1/1. Functionally, catalyzes the synthesis of GMP from XMP. This chain is GMP synthase [glutamine-hydrolyzing], found in Edwardsiella ictaluri (strain 93-146).